Here is a 416-residue protein sequence, read N- to C-terminus: Glutamate dehydrogenase (416 aa).

The active site involves lysine 105.

Belongs to the Glu/Leu/Phe/Val dehydrogenases family. In terms of assembly, homohexamer.

The catalysed reaction is L-glutamate + NAD(+) + H2O = 2-oxoglutarate + NH4(+) + NADH + H(+). It catalyses the reaction L-glutamate + NADP(+) + H2O = 2-oxoglutarate + NH4(+) + NADPH + H(+). This is Glutamate dehydrogenase (gdhA) from Thermotoga maritima (strain ATCC 43589 / DSM 3109 / JCM 10099 / NBRC 100826 / MSB8).